We begin with the raw amino-acid sequence, 908 residues long: Protein translocase subunit SecA (908 aa).

ATP is bound by residues Gln87, 105-109 (GEGKT), and Asp512. Residues 882-908 (DGEKVGRNDPCPCGSGKKYKQCHGKLT) are disordered. Positions 892, 894, 903, and 904 each coordinate Zn(2+). A compositionally biased stretch (basic residues) spans 898 to 908 (KKYKQCHGKLT).

The protein belongs to the SecA family. In terms of assembly, monomer and homodimer. Part of the essential Sec protein translocation apparatus which comprises SecA, SecYEG and auxiliary proteins SecDF-YajC and YidC. Zn(2+) serves as cofactor.

The protein resides in the cell inner membrane. It is found in the cytoplasm. It carries out the reaction ATP + H2O + cellular proteinSide 1 = ADP + phosphate + cellular proteinSide 2.. Part of the Sec protein translocase complex. Interacts with the SecYEG preprotein conducting channel. Has a central role in coupling the hydrolysis of ATP to the transfer of proteins into and across the cell membrane, serving both as a receptor for the preprotein-SecB complex and as an ATP-driven molecular motor driving the stepwise translocation of polypeptide chains across the membrane. The polypeptide is Protein translocase subunit SecA (Shewanella amazonensis (strain ATCC BAA-1098 / SB2B)).